We begin with the raw amino-acid sequence, 463 residues long: General transcription factor IIH subunit 4 (463 aa).

The protein belongs to the TFB2 family. Component of the 7-subunit TFIIH core complex composed of XPB/ERCC3, XPD/ERCC2, GTF2H1, GTF2H2, GTF2H3, GTF2H4 and GTF2H5, which is active in NER. The core complex associates with the 3-subunit CDK-activating kinase (CAK) module composed of CCNH/cyclin H, CDK7 and MNAT1 to form the 10-subunit holoenzyme (holo-TFIIH) active in transcription. Part of TBP-based Pol II pre-initiation complex (PIC), in which Pol II core assembles with general transcription factors and other specific initiation factors including GTF2E1, GTF2E2, GTF2F1, GTF2F2, TCEA1, ERCC2, ERCC3, GTF2H2, GTF2H3, GTF2H4, GTF2H5, GTF2A1, GTF2A2, GTF2B and TBP; this large multi-subunit PIC complex mediates DNA unwinding and targets Pol II core to the transcription start site where the first phosphodiester bond forms.

Its subcellular location is the nucleus. In terms of biological role, component of the general transcription and DNA repair factor IIH (TFIIH) core complex, which is involved in general and transcription-coupled nucleotide excision repair (NER) of damaged DNA and, when complexed to CAK, in RNA transcription by RNA polymerase II. In NER, TFIIH acts by opening DNA around the lesion to allow the excision of the damaged oligonucleotide and its replacement by a new DNA fragment. In transcription, TFIIH has an essential role in transcription initiation. When the pre-initiation complex (PIC) has been established, TFIIH is required for promoter opening and promoter escape. Phosphorylation of the C-terminal tail (CTD) of the largest subunit of RNA polymerase II by the kinase module CAK controls the initiation of transcription. The chain is General transcription factor IIH subunit 4 (Gtf2h4) from Mus musculus (Mouse).